A 716-amino-acid polypeptide reads, in one-letter code: Epidermal growth factor receptor kinase substrate 8-like protein 2 (716 aa).

2 disordered regions span residues 1–25 and 182–243; these read MSQS…DGVA and PQTL…SQEE. In terms of domain architecture, PID spans 46-202; the sequence is MHETSQYHVQ…RQRQSILPPP (157 aa). Positions 199-208 are enriched in pro residues; it reads LPPPQGPAPI. Residues 234–243 are compositionally biased toward basic and acidic residues; that stretch reads GFRRRESQEE. The residue at position 240 (Ser240) is a Phosphoserine. Thr304 is subject to Phosphothreonine. Residues 449 to 488 are disordered; it reads VSPVSRQSIRNSQKHSPTSEPTPPGDALPPVSSPHTHRGY. Ser450 bears the Phosphoserine mark. Positions 452–467 are enriched in polar residues; sequence VSRQSIRNSQKHSPTS. Phosphothreonine is present on Thr470. Positions 493–552 constitute an SH3 domain; the sequence is AMAKYVKILYDFTARNANELSVLKDEVLEVLEDGRQWWKLRSRSGQAGYVPCNILGEARP. Ser571 is subject to Phosphoserine.

Belongs to the EPS8 family. In terms of assembly, interacts with ABI1. Part of a complex that contains SOS1, ABI1 and EPS8L2. Associates with F-actin.

The protein resides in the cytoplasm. The protein localises to the cell projection. It localises to the stereocilium. Its function is as follows. Stimulates guanine exchange activity of SOS1. May play a role in membrane ruffling and remodeling of the actin cytoskeleton. In the cochlea, is required for stereocilia maintenance in adult hair cells. This chain is Epidermal growth factor receptor kinase substrate 8-like protein 2 (EPS8L2), found in Pongo abelii (Sumatran orangutan).